The primary structure comprises 402 residues: MAQDRKKVLVLGAGYAGLQTVTKLQKAISTEEAEITLINKNEYHYEATWLHEASAGTLNYEDVLYPVESVLKKDKVNFVQAEVTKIDRDAKKVETNQGIYDFDILVVALGFVSETFGIEGMKDHAFQIENVITARELSRHIEDKFANYAASKEKDDNDLSILVGGAGFTGVEFLGELTDRIPELCSKYGVDQNKVKITCVEAAPKMLPMFSEELVNHAVSYLEDRGVEFKIATPIVACNEKGFVVEVDGEKQQLNAGTSVWAAGVRGSKLMEESFEGVKRGRIVTKQDLTINGYDNIFVIGDCSAFIPAGEERPLPTTAQIAMQQGESVAKNIKRILNGESTEEFEYVDRGTVCSLGSHDGVGMVFDKPIAGKKAAFMKKVIDTRAVFKIGGIGLAFKKGKF.

FAD contacts are provided by residues 12–16, 39–40, and Val83; these read GAGYA and NK. Residue Glu172 is part of the active site. FAD is bound by residues Asp302, 319 to 320, and Lys379; that span reads AQ.

The protein belongs to the NADH dehydrogenase family. Requires FAD as cofactor.

Its subcellular location is the cell membrane. It carries out the reaction a quinone + NADH + H(+) = a quinol + NAD(+). Alternative, nonproton pumping NADH:quinone oxidoreductase that delivers electrons to the respiratory chain by oxidation of NADH and reduction of quinones, and contributes to the regeneration of NAD(+). This Staphylococcus aureus (strain MSSA476) protein is Type II NADH:quinone oxidoreductase.